A 145-amino-acid chain; its full sequence is Secreted RxLR effector protein PSE1 (145 aa).

Residues 1 to 21 (MRLSSFIVVGAAVVNLLTSGS) form the signal peptide. The RxLR-dEER signature appears at 53-73 (RLLRYHSNNNRGGDEDIAEER).

Belongs to the RxLR effector family.

It localises to the secreted. The protein resides in the host cell. Functionally, secreted effector that impairs both plant effector-triggered immunity and pathogen-associated molecular patterns (PAMP)-triggered immunity (PTI). Suppresses plant cell death as a part of the plant defense responses. Facilitates plant infection by altering the auxin content at the roots penetration points of the of the pathogen. The protein is Secreted RxLR effector protein PSE1 of Phytophthora nicotianae (Potato buckeye rot agent).